Here is a 361-residue protein sequence, read N- to C-terminus: Diacylglycerol O-acyltransferase 2 (361 aa).

Residues 1 to 42 (MKTLIAAYSGVLRGTGSSILSALQDLFSVTWLNRAKVEKQLQ) lie on the Cytoplasmic side of the membrane. Residues 43-61 (VISVLQWVLSFLVLGVACS) traverse the membrane as a helical segment. Residues 62–65 (VILM) lie on the Lumenal side of the membrane. The helical transmembrane segment at 66–85 (YTFCTDCWLIAVLYFTWLVF) threads the bilayer. The Cytoplasmic segment spans residues 86–361 (DWNTPKKGGR…LPETEVLEVN (276 aa)).

Belongs to the diacylglycerol acyltransferase family. Forms multimeric complexes consisting of several DGAT2 subunits. Interacts with SLC27A1 and this interaction is enhanced in the presence of ZFYVE1.

Its subcellular location is the endoplasmic reticulum membrane. The protein resides in the lipid droplet. It localises to the cytoplasm. The protein localises to the perinuclear region. It carries out the reaction an acyl-CoA + a 1,2-diacyl-sn-glycerol = a triacyl-sn-glycerol + CoA. The catalysed reaction is all-trans-retinol + an acyl-CoA = an all-trans-retinyl ester + CoA. It catalyses the reaction 2-(9Z-octadecenoyl)-glycerol + (9Z)-octadecenoyl-CoA = 1,2-di-(9Z-octadecenoyl)-sn-glycerol + CoA. The enzyme catalyses 1,2-di-(9Z-octadecenoyl)-sn-glycerol + (9Z)-octadecenoyl-CoA = 1,2,3-tri-(9Z-octadecenoyl)-glycerol + CoA. It carries out the reaction all-trans-retinol + hexadecanoyl-CoA = all-trans-retinyl hexadecanoate + CoA. The catalysed reaction is 1-O-(9Z-octadecenyl)-glycerol + (9Z)-octadecenoyl-CoA = 1-O-(9Z-octadecyl)-3-(9Z-octadecenoyl)-glycerol + CoA. It catalyses the reaction 1-(9Z-octadecenoyl)-glycerol + (9Z)-octadecenoyl-CoA = 1,2-di-(9Z-octadecenoyl)-glycerol + CoA. The enzyme catalyses 1,2-di-(9Z-octadecenoyl)-sn-glycerol + hexadecanoyl-CoA = 1,2-di-(9Z)-octadecenoyl-3-hexadecanoyl-sn-glycerol + CoA. It carries out the reaction 1,3-di-(9Z-octadecenoyl)-glycerol + (9Z)-octadecenoyl-CoA = 1,2,3-tri-(9Z-octadecenoyl)-glycerol + CoA. The catalysed reaction is 2,3-di-(9Z)-octadecenoyl-sn-glycerol + (9Z)-octadecenoyl-CoA = 1,2,3-tri-(9Z-octadecenoyl)-glycerol + CoA. It catalyses the reaction 2-(9Z-octadecenoyl)-glycerol + hexadecanoyl-CoA = 1-hexadecanoyl-2-(9Z-octadecenoyl)-sn-glycerol + CoA. It functions in the pathway glycerolipid metabolism; triacylglycerol biosynthesis. Its activity is regulated as follows. Inhibited by niacin. Its function is as follows. Essential acyltransferase that catalyzes the terminal and only committed step in triacylglycerol synthesis by using diacylglycerol and fatty acyl CoA as substrates. Required for synthesis and storage of intracellular triglycerides. Probably plays a central role in cytosolic lipid accumulation. In liver, is primarily responsible for incorporating endogenously synthesized fatty acids into triglycerides. Also functions as an acyl-CoA retinol acyltransferase (ARAT). Also able to use 1-monoalkylglycerol (1-MAkG) as an acyl acceptor for the synthesis of monoalkyl-monoacylglycerol (MAMAG). This is Diacylglycerol O-acyltransferase 2 (DGAT2) from Bos taurus (Bovine).